Consider the following 103-residue polypeptide: Large ribosomal subunit protein uL24 (103 aa).

Belongs to the universal ribosomal protein uL24 family. In terms of assembly, part of the 50S ribosomal subunit.

One of two assembly initiator proteins, it binds directly to the 5'-end of the 23S rRNA, where it nucleates assembly of the 50S subunit. Functionally, one of the proteins that surrounds the polypeptide exit tunnel on the outside of the subunit. The polypeptide is Large ribosomal subunit protein uL24 (Endomicrobium trichonymphae).